We begin with the raw amino-acid sequence, 863 residues long: Glycogen phosphorylase (863 aa).

Lys-618 carries the post-translational modification N6-(pyridoxal phosphate)lysine.

The protein belongs to the glycogen phosphorylase family. Pyridoxal 5'-phosphate is required as a cofactor.

It carries out the reaction [(1-&gt;4)-alpha-D-glucosyl](n) + phosphate = [(1-&gt;4)-alpha-D-glucosyl](n-1) + alpha-D-glucose 1-phosphate. In terms of biological role, phosphorylase is an important allosteric enzyme in carbohydrate metabolism. Enzymes from different sources differ in their regulatory mechanisms and in their natural substrates. However, all known phosphorylases share catalytic and structural properties. This is Glycogen phosphorylase (glgP) from Mycobacterium bovis (strain ATCC BAA-935 / AF2122/97).